An 83-amino-acid chain; its full sequence is Neurotoxin LmNaTx10 (83 aa).

The N-terminal stretch at 1–19 (MNFLIFIAVASSLALGALC) is a signal peptide. An LCN-type CS-alpha/beta domain is found at 21 to 80 (KEGYPYDGNNCRYICFRNQYCDDLCKKLKGESGYCYGWNQSCYCYGLPDTEKTKPDKRCH). 4 disulfides stabilise this stretch: C31/C79, C35/C55, C41/C62, and C45/C64.

Belongs to the long (4 C-C) scorpion toxin superfamily. Sodium channel inhibitor family. Alpha subfamily. Expressed by the venom gland.

Its subcellular location is the secreted. Binds voltage-independently at site-3 of voltage-gated sodium channels (Nav) and inhibits the inactivation of the activated channels, thereby blocking neuronal transmission. The chain is Neurotoxin LmNaTx10 from Lychas mucronatus (Chinese swimming scorpion).